A 331-amino-acid polypeptide reads, in one-letter code: FMRFamide-related neuropeptides (331 aa).

Residues 1-25 (MRCWSPCSLLVVIVIYCLSSHTSEA) form the signal peptide. Positions 26-65 (FDLAQACVESQRLSLLPICDTIFAVQQEGVQQSADDGMRS) are excised as a propeptide. Residues F71 and F83 each carry the phenylalanine amide modification. Residues 86–94 (NVPDLPFED) constitute a propeptide that is removed on maturation. F100 carries the post-translational modification Phenylalanine amide. Positions 103–168 (AAPQLDELLK…YIDDVEDSDV (66 aa)) are excised as a propeptide. A disordered region spans residues 122-158 (QKADETSVRRKRSTDAAPQNNAENPEQKNDSAKITKR). A compositionally biased stretch (basic and acidic residues) spans 146–158 (PEQKNDSAKITKR). Residues F174 and F181 each carry the phenylalanine amide modification. Residues 184-194 (NPSDVGNKLTE) constitute a propeptide that is removed on maturation. F200 bears the Phenylalanine amide mark. A propeptide spanning residues 203-205 (DPE) is cleaved from the precursor. Residue F211 is modified to Phenylalanine amide. The propeptide occupies 214–216 (SDD). Phenylalanine amide is present on F222. Residues 225–236 (NPSDAEDELEED) constitute a propeptide that is removed on maturation. At F242 the chain carries Phenylalanine amide. Positions 245 to 254 (GGEDDEEEAE) are excised as a propeptide. Residue F260 is modified to Phenylalanine amide. The propeptide occupies 263–265 (DPE). Residue F271 is modified to Phenylalanine amide. A propeptide spanning residues 274–277 (SGED) is cleaved from the precursor. Residues 279–296 (RFMRFGRNPDEQEADKRF) show a composition bias toward basic and acidic residues. Positions 279-310 (RFMRFGRNPDEQEADKRFMRFGRGGEDDEVST) are disordered. The residue at position 283 (F283) is a Phenylalanine amide. The propeptide occupies 286–293 (NPDEQEAD). F299 bears the Phenylalanine amide mark. Positions 302-312 (GGEDDEVSTED) are excised as a propeptide. F318 is modified (phenylalanine amide). Residues 321–331 (SADKCKGCLEG) constitute a propeptide that is removed on maturation.

It belongs to the FARP (FMRFamide related peptide) family.

The protein resides in the secreted. In terms of biological role, excitatory neurotransmitters that directly modulate chromatophore function by activating chromatophore expansion at the chromatophore neuromuscular junction. The sequence is that of FMRFamide-related neuropeptides from Doryteuthis opalescens (California market squid).